The primary structure comprises 426 residues: Phosphoribosylamine--glycine ligase (426 aa).

The ATP-grasp domain maps to 113-320 (KSLMTEAKIP…LLELLYRAST (208 aa)). Position 139-200 (139-200 (LESKSIPIVI…EEFMEGQEAS (62 aa))) interacts with ATP. Residues Glu-290 and Asn-292 each coordinate Mg(2+).

This sequence belongs to the GARS family. Mg(2+) is required as a cofactor. Requires Mn(2+) as cofactor.

It carries out the reaction 5-phospho-beta-D-ribosylamine + glycine + ATP = N(1)-(5-phospho-beta-D-ribosyl)glycinamide + ADP + phosphate + H(+). Its pathway is purine metabolism; IMP biosynthesis via de novo pathway; N(1)-(5-phospho-D-ribosyl)glycinamide from 5-phospho-alpha-D-ribose 1-diphosphate: step 2/2. The protein is Phosphoribosylamine--glycine ligase of Leptospira interrogans serogroup Icterohaemorrhagiae serovar copenhageni (strain Fiocruz L1-130).